A 356-amino-acid chain; its full sequence is Thrombopoietin (356 aa).

An N-terminal signal peptide occupies residues 1 to 21 (MELTDLLLAAMLLAVARLTLS). Intrachain disulfides connect Cys-28–Cys-172 and Cys-50–Cys-106. Asn-197, Asn-206, Asn-235, Asn-249, Asn-256, Asn-336, and Asn-351 each carry an N-linked (GlcNAc...) asparagine glycan. The segment at 291 to 356 (GGLPPSPSLA…PHPRNLSQET (66 aa)) is disordered. Residues 330–339 (PSTTMPNSTA) show a composition bias toward polar residues.

Belongs to the EPO/TPO family. In terms of tissue distribution, found mainly in the liver, kidney and skeletal muscle.

Its subcellular location is the secreted. Functionally, lineage-specific cytokine affecting the proliferation and maturation of megakaryocytes from their committed progenitor cells. It acts at a late stage of megakaryocyte development. It may be the major physiological regulator of circulating platelets. This chain is Thrombopoietin (Thpo), found in Mus musculus (Mouse).